A 213-amino-acid chain; its full sequence is Redox-sensing transcriptional repressor Rex (213 aa).

The H-T-H motif DNA-binding region spans 18–57 (LYYRIFKRFHAEKIERANSKQIAEAIGIDSATVRRDFSYF). Residue 92-97 (GIGNMG) participates in NAD(+) binding.

Belongs to the transcriptional regulatory Rex family. As to quaternary structure, homodimer.

Its subcellular location is the cytoplasm. In terms of biological role, modulates transcription in response to changes in cellular NADH/NAD(+) redox state. Binds to the promoter of the aldehyde-alcohol dehydrogenase adhE gene. Functions as a redox-dependent repressor of adhE expression. The sequence is that of Redox-sensing transcriptional repressor Rex from Streptococcus pneumoniae serotype 19F (strain G54).